Reading from the N-terminus, the 98-residue chain is MMLIECPNCGPRNETEFSYGGQAHVAYPEDPNALSDKEWSRYLFYRENSKGIFAERWVHSGGCRKWFNALRDTATYEFKAVYRAGEPRPELNTQGGSR.

Cys-6, Cys-9, His-59, and Cys-63 together coordinate Zn(2+).

The protein belongs to the SoxD family. As to quaternary structure, heterotetramer composed of subunits alpha (SoxA), beta (SoxB), gamma (SoxG) and delta (SoxD).

It is found in the cytoplasm. The catalysed reaction is sarcosine + (6S)-5,6,7,8-tetrahydrofolate + O2 = (6R)-5,10-methylene-5,6,7,8-tetrahydrofolate + glycine + H2O2. It carries out the reaction sarcosine + O2 + H2O = formaldehyde + glycine + H2O2. In terms of biological role, in the presence of tetrahydrofolate, catalyzes the oxidative demethylation of sarcosine to yield glycine, 5,10-methylenetetrahydrofolate and hydrogen peroxide. In the absence of tetrahydrofolate, catalyzes the oxidative demethylation of sarcosine to yield glycine, formaldehyde and hydrogen peroxide. The sequence is that of Sarcosine oxidase subunit delta from Corynebacterium sp. (strain P-1).